Reading from the N-terminus, the 1260-residue chain is Methionine synthase (1260 aa).

In terms of domain architecture, Hcy-binding spans 13-333; that stretch reads FGIIRKILSE…DHIRAFCNAI (321 aa). Residues C255, C318, and C319 each contribute to the Zn(2+) site. The region spanning 364–625 is the Pterin-binding domain; sequence FVNVGERCNV…IPKDLLKLVE (262 aa). Residues 655–749 enclose the B12-binding N-terminal domain; the sequence is EVEEWRNKPV…FMEEEKRLKR (95 aa). Methylcob(III)alamin contacts are provided by residues E699, 775–779, H778, S823, T827, and A879; that span reads GDVHD. Positions 766-883 constitute a B12-binding domain; the sequence is GVVVLATVKG…VHVLDASRSV (118 aa). One can recognise an AdoMet activation domain in the interval 916–1256; it reads SLKDRKYTSL…LSSILSYDRL (341 aa). S-adenosyl-L-methionine is bound by residues D966, R1163, and 1218–1219; that span reads YF.

It belongs to the vitamin-B12 dependent methionine synthase family. Methylcob(III)alamin serves as cofactor. Requires Zn(2+) as cofactor.

The enzyme catalyses (6S)-5-methyl-5,6,7,8-tetrahydrofolate + L-homocysteine = (6S)-5,6,7,8-tetrahydrofolate + L-methionine. It functions in the pathway amino-acid biosynthesis; L-methionine biosynthesis via de novo pathway; L-methionine from L-homocysteine (MetH route): step 1/1. Functionally, catalyzes the transfer of a methyl group from methyl-cobalamin to homocysteine, yielding enzyme-bound cob(I)alamin and methionine. Subsequently, remethylates the cofactor using methyltetrahydrofolate. This chain is Methionine synthase (mtr), found in Dictyostelium discoideum (Social amoeba).